A 264-amino-acid polypeptide reads, in one-letter code: 5'-nucleotidase SurE (264 aa).

Residues D12, D13, S43, and N98 each coordinate a divalent metal cation.

This sequence belongs to the SurE nucleotidase family. A divalent metal cation is required as a cofactor.

It is found in the cytoplasm. The enzyme catalyses a ribonucleoside 5'-phosphate + H2O = a ribonucleoside + phosphate. In terms of biological role, nucleotidase that shows phosphatase activity on nucleoside 5'-monophosphates. This Sulfurovum sp. (strain NBC37-1) protein is 5'-nucleotidase SurE.